The chain runs to 352 residues: 26S proteasome regulatory subunit rpn-8 (352 aa).

Residues 16 to 152 (VSVAPLVLLS…TDAYFAVDEI (137 aa)) form the MPN domain. The tract at residues 303–352 (NRQQQEENDAKKKEGENGEKKEGADKKEGSPAAANGESKEKENSPKEKKK) is disordered. 2 stretches are compositionally biased toward basic and acidic residues: residues 306 to 331 (QQEENDAKKKEGENGEKKEGADKKEG) and 339 to 352 (ESKEKENSPKEKKK).

This sequence belongs to the peptidase M67A family.

Acts as a regulatory subunit of the 26S proteasome which is involved in the ATP-dependent degradation of ubiquitinated proteins. The protein is 26S proteasome regulatory subunit rpn-8 (rpn-8) of Neurospora crassa (strain ATCC 24698 / 74-OR23-1A / CBS 708.71 / DSM 1257 / FGSC 987).